We begin with the raw amino-acid sequence, 311 residues long: NAD kinase (311 aa).

Asp88 (proton acceptor) is an active-site residue. Residues 88–89, 162–163, Arg190, Asp192, Val200, and 203–208 contribute to the NAD(+) site; these read DG, NE, and TAHNLS.

Belongs to the NAD kinase family. Requires a divalent metal cation as cofactor.

It is found in the cytoplasm. The enzyme catalyses NAD(+) + ATP = ADP + NADP(+) + H(+). Its function is as follows. Involved in the regulation of the intracellular balance of NAD and NADP, and is a key enzyme in the biosynthesis of NADP. Catalyzes specifically the phosphorylation on 2'-hydroxyl of the adenosine moiety of NAD to yield NADP. The protein is NAD kinase of Rhodopirellula baltica (strain DSM 10527 / NCIMB 13988 / SH1).